Consider the following 527-residue polypeptide: Peptide chain release factor 3 (527 aa).

A tr-type G domain is found at 9 to 277 (AKRRTFAIIS…AVVNWAPMPL (269 aa)). Residues 18-25 (SHPDAGKT), 86-90 (DTPGH), and 140-143 (NKLD) contribute to the GTP site.

This sequence belongs to the TRAFAC class translation factor GTPase superfamily. Classic translation factor GTPase family. PrfC subfamily.

The protein resides in the cytoplasm. Its function is as follows. Increases the formation of ribosomal termination complexes and stimulates activities of RF-1 and RF-2. It binds guanine nucleotides and has strong preference for UGA stop codons. It may interact directly with the ribosome. The stimulation of RF-1 and RF-2 is significantly reduced by GTP and GDP, but not by GMP. In Pseudomonas syringae pv. tomato (strain ATCC BAA-871 / DC3000), this protein is Peptide chain release factor 3.